A 278-amino-acid polypeptide reads, in one-letter code: MANYTAADIKALRERTGAGMMDVKKALDEANGDAEKAIEIIRIKGLKGATKREGRSTAEGLVAAKVSNGVGVMIEVNCETDFVAKADKFIQLADKVLAVAVESGAADLETLLATDVDGKPLSEVVIEEGAVLGEKVVVRRISRIEGATVDAYLHKTSKDLPAQVGVLFAVDGESEAAATAAHDVAVHIAAMAPNYLTREDVPSDLVESERRIAEETAKAEGKPEAALTKIVEGRVTGFYKGEVLVDQAFAKDAKKSVAQILEEAGVKGTAFARFRVGS.

The involved in Mg(2+) ion dislocation from EF-Tu stretch occupies residues 80–83 (TDFV).

This sequence belongs to the EF-Ts family.

It is found in the cytoplasm. Associates with the EF-Tu.GDP complex and induces the exchange of GDP to GTP. It remains bound to the aminoacyl-tRNA.EF-Tu.GTP complex up to the GTP hydrolysis stage on the ribosome. This chain is Elongation factor Ts, found in Pseudarthrobacter chlorophenolicus (strain ATCC 700700 / DSM 12829 / CIP 107037 / JCM 12360 / KCTC 9906 / NCIMB 13794 / A6) (Arthrobacter chlorophenolicus).